The primary structure comprises 135 residues: Large ribosomal subunit protein uL16c (135 aa).

This sequence belongs to the universal ribosomal protein uL16 family. As to quaternary structure, part of the 50S ribosomal subunit.

The protein resides in the plastid. It is found in the chloroplast. The polypeptide is Large ribosomal subunit protein uL16c (Olimarabidopsis pumila (Dwarf rocket)).